The chain runs to 225 residues: Putative tyrosine-protein phosphatase OCA1 (225 aa).

A compositionally biased stretch (acidic residues) spans 1–11 (MTDNCREDDDN). Positions 1-24 (MTDNCREDDDNLGTSGDNALSAPT) are disordered. The span at 12–24 (LGTSGDNALSAPT) shows a compositional bias: polar residues. In terms of domain architecture, Tyrosine-protein phosphatase spans 42–196 (NFCPVERYLY…FDTKSVTIDK (155 aa)). Cys-138 (phosphocysteine intermediate) is an active-site residue.

It belongs to the protein-tyrosine phosphatase family.

It is found in the cytoplasm. The enzyme catalyses O-phospho-L-tyrosyl-[protein] + H2O = L-tyrosyl-[protein] + phosphate. Functionally, putative tyrosine-protein phosphatase required for protection against superoxide stress. In Eremothecium gossypii (strain ATCC 10895 / CBS 109.51 / FGSC 9923 / NRRL Y-1056) (Yeast), this protein is Putative tyrosine-protein phosphatase OCA1 (OCA1).